An 83-amino-acid chain; its full sequence is MKAALLLVIFSLMLIGVLTKKSGYPTDHEGCKNWCVLNHSCGILCEGYGGSGYCYFWKLACWCDDIHNWVPTWSRATNKCRAK.

A signal peptide spans 1–19 (MKAALLLVIFSLMLIGVLT). The LCN-type CS-alpha/beta domain maps to 21-81 (KSGYPTDHEG…TWSRATNKCR (61 aa)). 4 disulfide bridges follow: Cys-31/Cys-80, Cys-35/Cys-54, Cys-41/Cys-61, and Cys-45/Cys-63. Position 83 (Lys-83) is a propeptide, removed by a carboxypeptidase.

It belongs to the long (4 C-C) scorpion toxin superfamily. Sodium channel inhibitor family. Beta subfamily. In terms of tissue distribution, expressed by the venom gland.

Its subcellular location is the secreted. Functionally, this toxin increases the peak sodium current, slows down the inactivation of sodium channels (Nav), and prolongs the action potential of dorsal root ganglion neurons, which indicates that it behaves as a classical alpha-toxin. It binds to mammal brain and insect sodium channels, but with a different manner. This peptide may bind to a distinct receptor site on mammal brain sodium channels, which is unconnected with that for BmKAS (a beta-toxin), BmKIT2 (a beta-toxin) or BmK I (an alpha toxin). In contrast, the receptor site for BmKabT on insect sodium channels might be closely related to that for the beta-insect depressant toxin BmKIT2. Possesses potent toxicity in mice but induces only paralysis in cotton bollworm. This chain is Toxin BmKBT, found in Olivierus martensii (Manchurian scorpion).